The primary structure comprises 171 residues: Adenine phosphoribosyltransferase (171 aa).

Belongs to the purine/pyrimidine phosphoribosyltransferase family. In terms of assembly, homodimer.

The protein localises to the cytoplasm. It catalyses the reaction AMP + diphosphate = 5-phospho-alpha-D-ribose 1-diphosphate + adenine. It functions in the pathway purine metabolism; AMP biosynthesis via salvage pathway; AMP from adenine: step 1/1. Functionally, catalyzes a salvage reaction resulting in the formation of AMP, that is energically less costly than de novo synthesis. This Acetivibrio thermocellus (strain ATCC 27405 / DSM 1237 / JCM 9322 / NBRC 103400 / NCIMB 10682 / NRRL B-4536 / VPI 7372) (Clostridium thermocellum) protein is Adenine phosphoribosyltransferase.